The following is a 102-amino-acid chain: Small ribosomal subunit protein uS14 (102 aa).

This sequence belongs to the universal ribosomal protein uS14 family. In terms of assembly, part of the 30S ribosomal subunit. Contacts proteins S3 and S10.

Binds 16S rRNA, required for the assembly of 30S particles and may also be responsible for determining the conformation of the 16S rRNA at the A site. In Wolbachia pipientis subsp. Culex pipiens (strain wPip), this protein is Small ribosomal subunit protein uS14.